The sequence spans 318 residues: Acetyl-coenzyme A carboxylase carboxyl transferase subunit alpha (318 aa).

Positions 43–293 (RSQTALRDLY…GDGIAAALKS (251 aa)) constitute a CoA carboxyltransferase C-terminal domain.

This sequence belongs to the AccA family. In terms of assembly, acetyl-CoA carboxylase is a heterohexamer composed of biotin carboxyl carrier protein (AccB), biotin carboxylase (AccC) and two subunits each of ACCase subunit alpha (AccA) and ACCase subunit beta (AccD).

It localises to the cytoplasm. The enzyme catalyses N(6)-carboxybiotinyl-L-lysyl-[protein] + acetyl-CoA = N(6)-biotinyl-L-lysyl-[protein] + malonyl-CoA. It functions in the pathway lipid metabolism; malonyl-CoA biosynthesis; malonyl-CoA from acetyl-CoA: step 1/1. Functionally, component of the acetyl coenzyme A carboxylase (ACC) complex. First, biotin carboxylase catalyzes the carboxylation of biotin on its carrier protein (BCCP) and then the CO(2) group is transferred by the carboxyltransferase to acetyl-CoA to form malonyl-CoA. This Bartonella bacilliformis (strain ATCC 35685 / KC583 / Herrer 020/F12,63) protein is Acetyl-coenzyme A carboxylase carboxyl transferase subunit alpha.